The sequence spans 68 residues: Cx9C motif-containing protein 4 (68 aa).

Residues 4-46 form the CHCH domain; the sequence is KDPCQKQACEIQKCLQANNYLESKCQAVIQELRKCCARYPKGR. Short sequence motifs (cx9C motif) lie at residues 7 to 17 and 28 to 38; these read CQKQACEIQKC and CQAVIQELRKC. Intrachain disulfides connect Cys7–Cys38, Cys17–Cys28, and Cys39–Cys50.

Belongs to the CMC4 family. In terms of tissue distribution, expressed in many tissues.

The protein resides in the mitochondrion. This is Cx9C motif-containing protein 4 (Cmc4) from Mus musculus (Mouse).